Reading from the N-terminus, the 236-residue chain is HTH-type transcriptional regulator SACE_5812 (236 aa).

An HTH tetR-type domain is found at 30-90 (LLTQDKIVSA…LALDAVFGEV (61 aa)). A DNA-binding region (H-T-H motif) is located at residues 53–72 (SMRKLADRLQAHATSLYWHV).

Transcriptional regulator that inhibits erythromycin production. Directly represses the expression of SACE_5813, eryAI (encoding polyketide synthase I) and ermE (encoding rRNA methyltransferase), suggesting its direct regulation of the erythromycin biosynthesis gene cluster. May play an important role in regulating secondary metabolism in actinomycetes. In Saccharopolyspora erythraea (strain ATCC 11635 / DSM 40517 / JCM 4748 / NBRC 13426 / NCIMB 8594 / NRRL 2338), this protein is HTH-type transcriptional regulator SACE_5812.